The primary structure comprises 156 residues: Small ribosomal subunit protein uS7 (156 aa).

It belongs to the universal ribosomal protein uS7 family. As to quaternary structure, part of the 30S ribosomal subunit. Contacts proteins S9 and S11.

Functionally, one of the primary rRNA binding proteins, it binds directly to 16S rRNA where it nucleates assembly of the head domain of the 30S subunit. Is located at the subunit interface close to the decoding center, probably blocks exit of the E-site tRNA. The protein is Small ribosomal subunit protein uS7 of Geobacter metallireducens (strain ATCC 53774 / DSM 7210 / GS-15).